A 777-amino-acid polypeptide reads, in one-letter code: Glucocorticoid receptor (777 aa).

The segment covering 1–14 (MDSKESLTPGKEEN) has biased composition (basic and acidic residues). Positions 1–21 (MDSKESLTPGKEENPSSVLTQ) are disordered. The interval 1–420 (MDSKESLTPG…TATTGPPPKL (420 aa)) is modulating. Thr-8 carries the phosphothreonine modification. Arg-23 is subject to Omega-N-methylarginine. Phosphoserine is present on residues Ser-45, Ser-113, Ser-134, and Ser-141. The disordered stretch occupies residues 130–182 (NRSTSVPENPKSSASSSVSAAPKEKEFPKTHSDVSSEQQNLKGQTGTNGGNVK). Low complexity predominate over residues 134-150 (SVPENPKSSASSSVSAA). Residues 151-163 (PKEKEFPKTHSDV) show a composition bias toward basic and acidic residues. The segment covering 164-174 (SSEQQNLKGQT) has biased composition (polar residues). A phosphoserine mark is found at Ser-203, Ser-211, and Ser-226. Lys-258 is covalently cross-linked (Glycyl lysine isopeptide (Lys-Gly) (interchain with G-Cter in SUMO2)). Ser-267 carries the post-translational modification Phosphoserine. Residues Lys-277 and Lys-293 each participate in a glycyl lysine isopeptide (Lys-Gly) (interchain with G-Cter in SUMO); alternate cross-link. Glycyl lysine isopeptide (Lys-Gly) (interchain with G-Cter in SUMO2); alternate cross-links involve residues Lys-277 and Lys-293. Low complexity predominate over residues 394 to 414 (SSPSMRPDVSSPPSSSSTATT). Residues 394 to 415 (SSPSMRPDVSSPPSSSSTATTG) are disordered. Position 404 is a phosphoserine (Ser-404). Residue Lys-419 forms a Glycyl lysine isopeptide (Lys-Gly) (interchain with G-Cter in ubiquitin) linkage. NR C4-type zinc fingers lie at residues 421 to 441 (CLVCSDEASGCHYGVLTCGSC) and 457 to 481 (CAGRNDCIIDKIRRKNCPACRYRKC). A DNA-binding region (nuclear receptor) is located at residues 421–486 (CLVCSDEASG…RYRKCLQAGM (66 aa)). Residues Lys-480, Lys-492, Lys-494, and Lys-495 each carry the N6-acetyllysine modification. Residues 485-777 (GMNLEARKTK…NIKKLLFHQK (293 aa)) form an interaction with CLOCK region. The interval 487–523 (NLEARKTKKKIKGIQQATTGVSQETSENPANKTIVPA) is hinge. The 235-residue stretch at 524–758 (TLPQLTPTLV…FPEMLAEIIT (235 aa)) folds into the NR LBD domain. Residues 532–697 (LVSLLEVIEP…EIRMTYIKEL (166 aa)) are interaction with CRY1. A Glycyl lysine isopeptide (Lys-Gly) (interchain with G-Cter in SUMO) cross-link involves residue Lys-703.

Belongs to the nuclear hormone receptor family. NR3 subfamily. As to quaternary structure, heteromultimeric cytoplasmic complex with HSP90AA1, HSPA1A/HSPA1B, and FKBP5 or another immunophilin such as PPID, STIP1, or the immunophilin homolog PPP5C. Upon ligand binding FKBP5 dissociates from the complex and FKBP4 takes its place, thereby linking the complex to dynein and mediating transport to the nucleus, where the complex dissociates. Probably forms a complex composed of chaperones HSP90 and HSP70, co-chaperones CDC37, PPP5C, TSC1 and client protein TSC2, CDK4, AKT, RAF1 and NR3C1; this complex does not contain co-chaperones STIP1/HOP and PTGES3/p23. Directly interacts with UNC45A. Binds to DNA as a homodimer, and as heterodimer with NR3C2 or the retinoid X receptor. Binds STAT5A and STAT5B homodimers and heterodimers. Interacts with NRIP1, POU2F1, POU2F2 and TRIM28. Interacts with several coactivator complexes, including the SMARCA4 complex, CREBBP/EP300, TADA2L (Ada complex) and p160 coactivators such as NCOA2 and NCOA6. Interaction with BAG1 inhibits transactivation. Interacts with HEXIM1 and TGFB1I1. Interacts with NCOA1. Interacts with NCOA3, SMARCA4, SMARCC1, SMARCD1, and SMARCE1. Interacts with CLOCK, CRY1 and CRY2 in a ligand-dependent fashion. Interacts with CIART. Interacts with RWDD3. Interacts with UBE2I/UBC9 and this interaction is enhanced in the presence of RWDD3. Interacts with GRIP1. Interacts with NR4A3 (via nuclear receptor DNA-binding domain), represses transcription activity of NR4A3 on the POMC promoter Nur response element (NurRE). Directly interacts with PNRC2 to attract and form a complex with UPF1 and DCP1A; the interaction leads to rapid mRNA degradation. Interacts with GSK3B. Interacts with FNIP1 and FNIP2. Interacts (via C-terminus) with HNRNPU (via C-terminus). Interacts with MCM3AP. Interacts (via domain NR LBD) with HSP90AA1 and HSP90AB1. In the absence of hormonal ligand, interacts with TACC1. Interacts (via NR LBD domain) with ZNF764 (via KRAB domain); the interaction regulates transcription factor activity of NR3C1 by directing its actions toward certain biologic pathways. In terms of processing, acetylation by CLOCK reduces its binding to glucocorticoid response elements and its transcriptional activity. Post-translationally, increased proteasome-mediated degradation in response to glucocorticoids. Phosphorylated in the absence of hormone; becomes hyperphosphorylated in the presence of glucocorticoid. The Ser-203, Ser-226 and Ser-404-phosphorylated forms are mainly cytoplasmic, and the Ser-211-phosphorylated form is nuclear. Phosphorylation at Ser-211 increases transcriptional activity. Phosphorylation at Ser-203, Ser-226 and Ser-404 decreases signaling capacity. Phosphorylation at Ser-404 may protect from glucocorticoid-induced apoptosis. Phosphorylation at Ser-203 and Ser-211 is not required in regulation of chromosome segregation. May be dephosphorylated by PPP5C, attenuates NR3C1 action. In terms of processing, ubiquitinated by UBR5, leading to its degradation: UBR5 specifically recognizes and binds ligand-bound NR3C1 when it is not associated with coactivators (NCOAs). In presence of NCOAs, the UBR5-degron is not accessible, preventing its ubiquitination and degradation. Post-translationally, sumoylation at Lys-277 and Lys-293 negatively regulates its transcriptional activity. Sumoylation at Lys-703 positively regulates its transcriptional activity in the presence of RWDD3. Sumoylation at Lys-277 and Lys-293 is dispensable whereas sumoylation at Lys-703 is critical for the stimulatory effect of RWDD3 on its transcriptional activity. Heat shock increases sumoylation in a RWDD3-dependent manner. In terms of tissue distribution, within the infant and adult hippocampal formation, highest expression observed in the DG granule cell layer with moderate levels in the DG hilus, the CA2-CA4 pyramidal cell layer and the proximal part of the CA1 pyramidal cell layer. Moderate to high expression levels found in the presubiculum and in its' superficial layers. Weak but specific expression detected throughout the entire corticle mantle. In the amygdala, moderate levels were detected in the lateral, central and medial nuclei. Moderate expression levels were present in the PVNh alongside the third ventricle.

It localises to the cytoplasm. It is found in the nucleus. Its subcellular location is the mitochondrion. The protein resides in the cytoskeleton. The protein localises to the spindle. It localises to the microtubule organizing center. It is found in the centrosome. Its subcellular location is the chromosome. The protein resides in the nucleoplasm. Functionally, receptor for glucocorticoids (GC). Has a dual mode of action: as a transcription factor that binds to glucocorticoid response elements (GRE), both for nuclear and mitochondrial DNA, and as a modulator of other transcription factors. Affects inflammatory responses, cellular proliferation and differentiation in target tissues. Involved in chromatin remodeling. Plays a role in rapid mRNA degradation by binding to the 5' UTR of target mRNAs and interacting with PNRC2 in a ligand-dependent manner which recruits the RNA helicase UPF1 and the mRNA-decapping enzyme DCP1A, leading to RNA decay. Could act as a coactivator for STAT5-dependent transcription upon growth hormone (GH) stimulation and could reveal an essential role of hepatic GR in the control of body growth. Mediates glucocorticoid-induced apoptosis. Promotes accurate chromosome segregation during mitosis. May act as a tumor suppressor. May play a negative role in adipogenesis through the regulation of lipolytic and antilipogenic gene expression. This chain is Glucocorticoid receptor (NR3C1), found in Callithrix jacchus (White-tufted-ear marmoset).